Here is a 150-residue protein sequence, read N- to C-terminus: Large ribosomal subunit protein uL13 (150 aa).

It belongs to the universal ribosomal protein uL13 family. As to quaternary structure, part of the 50S ribosomal subunit.

Its function is as follows. This protein is one of the early assembly proteins of the 50S ribosomal subunit, although it is not seen to bind rRNA by itself. It is important during the early stages of 50S assembly. The chain is Large ribosomal subunit protein uL13 from Chlamydia muridarum (strain MoPn / Nigg).